The chain runs to 1168 residues: MDDDDFDDIPDEDLMLAFTQATGNITSHHPSNSKQLASSAKPPAQAWPISDSARRIVTPTVSQGQATATGRAKTASKPTTSATTSRPSLAQSSQRKNLRQTTLWGGTLEEDAQPAPQAVSNRPFRADMPPEQPTHHEIDIEEMKTWVYPMNLGPIRDYQFSIVKNGLFNNTLVALPTGLGKTFIAATIMLNYIRWTKTAKAVFVAPTKPLASQQVQACLSIAGIPRSQATLLTGETPPVLREDEWATKRLFFMTPQTLMNDLSKGYADPKSIVLLVIDEAHRATGDYAYVKVVEFLRRFSKSFRILALTATPGSSLEGVQDVIDNLGISHVEIRTEESIDIRQYVHSRDINTITFDPSDEMMEVRDLFSKALKPLVTKLSSQNIYYGRDPMSLTTYGLMKARNDWMAGPGRHVNQGTKFSVIATFAILQSLAHSIKLLNFHGIKPFYNNLAEFRTTEEEKGGKGSKLKRQVLEDENFQKMMDMIEGWMKIDGFLGHPKLEYLCETLVNHFMDAGEGSNTRAIVFSEYRDSAEEIVRILNKQPLIKATVFVGQADSKRSEGMKQKQQIETIEKFKNGAHNVLVATSIGEEGLDIGQVDLIVCYDASASPIRMLQRMGRTGRKRAGNIVLLLMKGKEEDKFNEAKDNYATMQRMICEGSRFTFRHDLSSRIVPRDIRPEVEKKVVEIPLENSQNPELPEPKRSAARMRTKPAKKKFNMPDGVETGFIKASFFGQAGAKTAKPPARPPAPKETDFIAERPKLESILLSTSQENELRRNYTKIPLGHSKVEELDIDWYRHPTSRRVVQKTIHVKHGEYTKRCVKLFRSLAKSQAPANRYTKPYGETDTSSWELIPLPPLADETEGETSRKGQKKRPRLESGQEAEEAEQYAAPKKRQATAKTKSTGVSKQTNKPRARHTALISDCEEGGNEYDGNVDDDEQSRPRNFRSKGRGRGSGRGKKSQPKQGDPNVDYGDDCTRTSDMEMGTDGSDDGADLEDFIVSDGEVTSSLQHRPRGSTSPTTAPDAGSSSLSSKTGRKQQAPDSFASDEDDGDVFGPKFVPVTASAAKGSLPSTARREKPKPFYVPVELPATQDTTDGDDDLPDIEFLSAKRKREGTGTGMRTGSPGHVKVGDTSKGGSGGDQTREKPSGGAASHARARKRTVVMDSDDDQE.

2 stretches are compositionally biased toward polar residues: residues 24–38 (NITSHHPSNSKQLAS) and 59–68 (PTVSQGQATA). Residues 24-132 (NITSHHPSNS…PFRADMPPEQ (109 aa)) are disordered. The span at 71–88 (RAKTASKPTTSATTSRPS) shows a compositional bias: low complexity. Residues 89 to 104 (LAQSSQRKNLRQTTLW) are compositionally biased toward polar residues. A Helicase ATP-binding domain is found at 162-330 (IVKNGLFNNT…DVIDNLGISH (169 aa)). 175-182 (LPTGLGKT) contacts ATP. Residues 278 to 281 (DEAH) carry the DEAH box motif. The 160-residue stretch at 506-665 (LVNHFMDAGE…GSRFTFRHDL (160 aa)) folds into the Helicase C-terminal domain. Disordered stretches follow at residues 690 to 717 (SQNPELPEPKRSAARMRTKPAKKKFNMP) and 830 to 1168 (APAN…DDQE). Residues 701 to 714 (SAARMRTKPAKKKF) are compositionally biased toward basic residues. The segment covering 895–907 (TAKTKSTGVSKQT) has biased composition (polar residues). Acidic residues predominate over residues 920–936 (DCEEGGNEYDGNVDDDE). Residues 941-959 (RNFRSKGRGRGSGRGKKSQ) are compositionally biased toward basic residues. Over residues 985 to 996 (GSDDGADLEDFI) the composition is skewed to acidic residues. Positions 1001–1030 (EVTSSLQHRPRGSTSPTTAPDAGSSSLSSK) are enriched in polar residues.

The protein belongs to the DEAD box helicase family. DEAH subfamily. FANCM sub-subfamily. As to quaternary structure, interacts with the MHF histone-fold complex to form the FANCM-MHF complex.

The protein resides in the nucleus. It catalyses the reaction ATP + H2O = ADP + phosphate + H(+). Its function is as follows. ATP-dependent DNA helicase involved in DNA damage repair by homologous recombination and in genome maintenance. Capable of unwinding D-loops. Plays a role in limiting crossover recombinants during mitotic DNA double-strand break (DSB) repair. Component of a FANCM-MHF complex which promotes gene conversion at blocked replication forks, probably by reversal of the stalled fork. This Neurospora crassa (strain ATCC 24698 / 74-OR23-1A / CBS 708.71 / DSM 1257 / FGSC 987) protein is ATP-dependent DNA helicase mph1.